A 204-amino-acid chain; its full sequence is Redox-sensing transcriptional repressor Rex 2 (204 aa).

The segment at residues 17 to 53 (MYRKVLEATKKPYISSDEIARFLEINPDLVRKDFSYL) is a DNA-binding region (H-T-H motif).

It belongs to the transcriptional regulatory Rex family. As to quaternary structure, homodimer.

The protein localises to the cytoplasm. In terms of biological role, modulates transcription in response to changes in cellular NADH/NAD(+) redox state. The polypeptide is Redox-sensing transcriptional repressor Rex 2 (rex2) (Thermotoga maritima (strain ATCC 43589 / DSM 3109 / JCM 10099 / NBRC 100826 / MSB8)).